The chain runs to 152 residues: 3-hydroxyacyl-[acyl-carrier-protein] dehydratase FabZ (152 aa).

The active site involves His57.

It belongs to the thioester dehydratase family. FabZ subfamily.

The protein resides in the cytoplasm. It catalyses the reaction a (3R)-hydroxyacyl-[ACP] = a (2E)-enoyl-[ACP] + H2O. Involved in unsaturated fatty acids biosynthesis. Catalyzes the dehydration of short chain beta-hydroxyacyl-ACPs and long chain saturated and unsaturated beta-hydroxyacyl-ACPs. The sequence is that of 3-hydroxyacyl-[acyl-carrier-protein] dehydratase FabZ from Bradyrhizobium sp. (strain BTAi1 / ATCC BAA-1182).